The sequence spans 92 residues: DNA-binding protein HU (92 aa).

Belongs to the bacterial histone-like protein family. In terms of assembly, homodimer.

In terms of biological role, histone-like DNA-binding protein which is capable of wrapping DNA to stabilize it, and thus to prevent its denaturation under extreme environmental conditions. This is DNA-binding protein HU (hup) from Buchnera aphidicola subsp. Baizongia pistaciae (strain Bp).